The primary structure comprises 490 residues: Kinetochore protein Nuf2 homolog (490 aa).

2 coiled-coil regions span residues 146–280 (DRKF…KLEA) and 310–407 (DLID…SETI). Disordered regions lie at residues 346 to 365 (QSET…EERQ) and 468 to 490 (IDAG…SVFK).

Belongs to the NUF2 family. In terms of assembly, component of the NDC80 complex, which is composed of at least ndc-80 and him-10. The NDC80 complex interacts with knl-1.

It localises to the nucleus. The protein resides in the chromosome. The protein localises to the centromere. It is found in the kinetochore. In terms of biological role, acts as a component of the essential kinetochore-associated NDC80 complex, which is required for chromosome segregation in mitosis and meiosis and spindle checkpoint activity. The ndc-80 complex synergistically enhances the affinity of the ska-1 complex for microtubules and may allow the ndc-80 complex to track depolymerizing microtubules. The protein is Kinetochore protein Nuf2 homolog (him-10) of Caenorhabditis elegans.